The sequence spans 484 residues: Trigger factor (484 aa).

One can recognise a PPIase FKBP-type domain in the interval 162 to 243 (GDFISIDLSA…VKSVKERELP (82 aa)). Positions 427-484 (DGNTIDTSEFFGKPPENDVTDLLDDDADGDAGVDADGDTENSAEPADADSADTAQGAG) are disordered. A compositionally biased stretch (acidic residues) spans 444 to 476 (DVTDLLDDDADGDAGVDADGDTENSAEPADADS).

This sequence belongs to the FKBP-type PPIase family. Tig subfamily.

It is found in the cytoplasm. The catalysed reaction is [protein]-peptidylproline (omega=180) = [protein]-peptidylproline (omega=0). In terms of biological role, involved in protein export. Acts as a chaperone by maintaining the newly synthesized protein in an open conformation. Functions as a peptidyl-prolyl cis-trans isomerase. The chain is Trigger factor from Mycobacterium ulcerans (strain Agy99).